The following is a 676-amino-acid chain: Methionine--tRNA ligase (676 aa).

A 'HIGH' region motif is present at residues P11 to H21. Zn(2+) is bound by residues C143, C146, C156, and C159. A 'KMSKS' region motif is present at residues K326 to S330. T329 provides a ligand contact to ATP. The tRNA-binding domain maps to E581–K676.

The protein belongs to the class-I aminoacyl-tRNA synthetase family. MetG type 1 subfamily. Homodimer. It depends on Zn(2+) as a cofactor.

Its subcellular location is the cytoplasm. The enzyme catalyses tRNA(Met) + L-methionine + ATP = L-methionyl-tRNA(Met) + AMP + diphosphate. Its function is as follows. Is required not only for elongation of protein synthesis but also for the initiation of all mRNA translation through initiator tRNA(fMet) aminoacylation. This is Methionine--tRNA ligase from Methanosphaera stadtmanae (strain ATCC 43021 / DSM 3091 / JCM 11832 / MCB-3).